A 994-amino-acid chain; its full sequence is Glutamate [NMDA] receptor subunit 1 (994 aa).

The first 23 residues, 1–23 (MAADGFVYRWLLFGTTIVLLAEA), serve as a signal peptide directing secretion. Over 24–570 (AQRHTASDNP…TLVSFLQPFS (547 aa)) the chain is Extracellular. Residues Asn255, Asn311, Asn342, Asn394, Asn451, Asn478, and Asn498 are each glycosylated (N-linked (GlcNAc...) asparagine). Glycine is bound by residues 527–529 (PLT) and Arg534. The chain crosses the membrane as a helical span at residues 571–591 (NTLWILVMVSVHVVALVLYLL). The Cytoplasmic portion of the chain corresponds to 592 to 648 (DRFSPFGRFKLSHSDSNEEKALNLSSAVWFAWGVLLNSGIGEGTPRSFSARVLGMVW). A helical transmembrane segment spans residues 649–669 (AGFAMIIVASYTANLAAFLVL). Residues 670-828 (ERPKTKLSGI…KTPNTLGLKN (159 aa)) are Extracellular-facing. Asn690 carries N-linked (GlcNAc...) asparagine glycosylation. Glycine is bound by residues Ser700 and Asp744. Residues 829–849 (MAGVFILVGVGIAGGVGLIII) traverse the membrane as a helical segment. Over 850-994 (EVIYKKHQVK…YTSDVSHLVV (145 aa)) the chain is Cytoplasmic. The interval 971–994 (RPQQNMLPPRYSPGYTSDVSHLVV) is disordered. The span at 984-994 (GYTSDVSHLVV) shows a compositional bias: polar residues.

This sequence belongs to the glutamate-gated ion channel (TC 1.A.10.1) family. In terms of assembly, forms a heteromeric NMDA channel with Nmdar2.

The protein localises to the cell membrane. The protein resides in the postsynaptic cell membrane. Its subcellular location is the postsynaptic density. Its function is as follows. NMDA receptor subtype of glutamate-gated ion channels with high calcium permeability and voltage-dependent sensitivity to magnesium. Mediated by glycine. This protein plays a key role in synaptic plasticity, synaptogenesis, excitotoxicity, memory acquisition and learning. It mediates neuronal functions in glutamate neurotransmission. Is involved in the cell surface targeting of NMDA receptors. Plays a role in associative learning and in long-term memory consolidation. This Drosophila ananassae (Fruit fly) protein is Glutamate [NMDA] receptor subunit 1.